The following is a 290-amino-acid chain: ATP synthase gamma chain (290 aa).

The protein belongs to the ATPase gamma chain family. As to quaternary structure, F-type ATPases have 2 components, CF(1) - the catalytic core - and CF(0) - the membrane proton channel. CF(1) has five subunits: alpha(3), beta(3), gamma(1), delta(1), epsilon(1). CF(0) has three main subunits: a, b and c.

It localises to the cell inner membrane. Its function is as follows. Produces ATP from ADP in the presence of a proton gradient across the membrane. The gamma chain is believed to be important in regulating ATPase activity and the flow of protons through the CF(0) complex. This chain is ATP synthase gamma chain, found in Amoebophilus asiaticus (strain 5a2).